The following is an 847-amino-acid chain: Glucans biosynthesis glucosyltransferase H (847 aa).

The Cytoplasmic portion of the chain corresponds to 1 to 138 (MNKTTEYIDA…KWRTVGTIRR (138 aa)). A helical membrane pass occupies residues 139–156 (YILLILTLAQTVVATWYM). The Periplasmic segment spans residues 157-193 (KTILPYQGWALINPMDMVGQDIWVSFMQLLPYMLQTG). Residues 194-216 (ILILFAVLFCWVSAGFWTALMGF) traverse the membrane as a helical segment. At 217 to 511 (LQLLIGRDKY…LVKGMHPVHR (295 aa)) the chain is on the cytoplasmic side. Residues 512–534 (AVFLTGVMSYLSAPLWFMFLALS) traverse the membrane as a helical segment. The Periplasmic portion of the chain corresponds to 535 to 567 (TALQVVHALTEPQYFLQPRQLFPVWPQWRPELA). The helical transmembrane segment at 568–590 (IALFASTMVLLFLPKLLSIMLIW) threads the bilayer. Topologically, residues 591-602 (CKGTKEYGGFWR) are cytoplasmic. The helical transmembrane segment at 603 to 625 (VTLSLLLEVLFSVLLAPVRMLFH) threads the bilayer. The Periplasmic portion of the chain corresponds to 626-679 (TVFVVSAFLGWEVVWNSPQRDDDSTPWGEAFMRHGSQLLLGLVWAVGMAWLDLR). The helical transmembrane segment at 680-702 (FLFWLAPIVFSLILSPFVSVISS) threads the bilayer. Topologically, residues 703–847 (RSTVGLRTKR…ALQGRTSSAG (145 aa)) are cytoplasmic.

The protein belongs to the glycosyltransferase 2 family. OpgH subfamily.

It localises to the cell inner membrane. It participates in glycan metabolism; osmoregulated periplasmic glucan (OPG) biosynthesis. Involved in the biosynthesis of osmoregulated periplasmic glucans (OPGs). The polypeptide is Glucans biosynthesis glucosyltransferase H (Salmonella typhi).